The primary structure comprises 107 residues: Small ribosomal subunit protein uS10m (107 aa).

This sequence belongs to the universal ribosomal protein uS10 family.

It is found in the mitochondrion. This Prototheca wickerhamii protein is Small ribosomal subunit protein uS10m (RPS10).